The primary structure comprises 510 residues: ATP synthase subunit alpha (510 aa).

169-176 (GDRQTGKT) is an ATP binding site.

This sequence belongs to the ATPase alpha/beta chains family. As to quaternary structure, F-type ATPases have 2 components, CF(1) - the catalytic core - and CF(0) - the membrane proton channel. CF(1) has five subunits: alpha(3), beta(3), gamma(1), delta(1), epsilon(1). CF(0) has three main subunits: a(1), b(2) and c(9-12). The alpha and beta chains form an alternating ring which encloses part of the gamma chain. CF(1) is attached to CF(0) by a central stalk formed by the gamma and epsilon chains, while a peripheral stalk is formed by the delta and b chains.

The protein resides in the cell inner membrane. It carries out the reaction ATP + H2O + 4 H(+)(in) = ADP + phosphate + 5 H(+)(out). Its function is as follows. Produces ATP from ADP in the presence of a proton gradient across the membrane. The alpha chain is a regulatory subunit. The chain is ATP synthase subunit alpha from Anaeromyxobacter dehalogenans (strain 2CP-1 / ATCC BAA-258).